The sequence spans 203 residues: Thymidylate kinase (203 aa).

14–21 serves as a coordination point for ATP; the sequence is GGEGIGKS.

Belongs to the thymidylate kinase family.

It catalyses the reaction dTMP + ATP = dTDP + ADP. Its function is as follows. Phosphorylation of dTMP to form dTDP in both de novo and salvage pathways of dTTP synthesis. The protein is Thymidylate kinase of Rickettsia africae (strain ESF-5).